We begin with the raw amino-acid sequence, 427 residues long: MLTARSKDLFTQAQEFIPGGVNSPVRAFKSVGADPLFIKKAFGCTITDADNNSYIDYVGSWGPMILGHCHPQVVEAVKRAVESGSSFGAPTELEITLARMVIDAVPSIEMVRMVSSGTEATMSAIRLARGYTGRDKIIKFSGCYHGHADALLVKAGSGAATFGVPDSPGVPVDVAKNTLTAQFNDLDSVSKLIDENKNEIACIIVEPIAGNMGTVPPGEGFLEGLRSICDSEGIVLIFDEVMTGFRVAYGGAQELYGVTPDMTTLGKIIGGGLPVGAFGGKKDIMKLLSPSGGVYQAGTLSGNPLAMTAGIETLKLLQADGFYEQLEQTSRRLAEGITEAAKSAGYPIYPTRVGSMFCTFFTSNEVKDWPTATTCDTKAFAAFFRMMLEKGIYLAPSQFETAFVSIAHTEVEIEKTIVAARSCFAAL.

Lys267 is subject to N6-(pyridoxal phosphate)lysine.

The protein belongs to the class-III pyridoxal-phosphate-dependent aminotransferase family. HemL subfamily. Homodimer. The cofactor is pyridoxal 5'-phosphate.

The protein localises to the cytoplasm. The enzyme catalyses (S)-4-amino-5-oxopentanoate = 5-aminolevulinate. Its pathway is porphyrin-containing compound metabolism; protoporphyrin-IX biosynthesis; 5-aminolevulinate from L-glutamyl-tRNA(Glu): step 2/2. This is Glutamate-1-semialdehyde 2,1-aminomutase from Geobacter sulfurreducens (strain ATCC 51573 / DSM 12127 / PCA).